The sequence spans 239 residues: MNNDVISPEFDENGRPLRRIRSFVRRQGRLTKGQQHALDHYWPVMGVEYRAEPLDLVALFGRDAPVTLEIGFGMGSSLVEMAKTNPQQNFLGIEVHSPGVGACLSAAHEEGVENLRVMCHDAVEVLEKMIPDGSLHMVQLFFPDPWHKARHNKRRIVQVPFAQLVLRKLQPGGVFHMATDWEPYAEHMLEVMSSVEGYENLSPTQDYVPRPASRPVTKFEQRGHRLGHGVWDLMFGRVK.

Positions 69, 94, 121, and 144 each coordinate S-adenosyl-L-methionine. The active site involves D144. K148 serves as a coordination point for substrate. The tract at residues 150–155 (RHNKRR) is interaction with RNA. Residues D180 and 217–220 (TKFE) contribute to the substrate site.

This sequence belongs to the class I-like SAM-binding methyltransferase superfamily. TrmB family. In terms of assembly, monomer.

It carries out the reaction guanosine(46) in tRNA + S-adenosyl-L-methionine = N(7)-methylguanosine(46) in tRNA + S-adenosyl-L-homocysteine. It participates in tRNA modification; N(7)-methylguanine-tRNA biosynthesis. In terms of biological role, catalyzes the formation of N(7)-methylguanine at position 46 (m7G46) in tRNA. The chain is tRNA (guanine-N(7)-)-methyltransferase from Cronobacter sakazakii (strain ATCC BAA-894) (Enterobacter sakazakii).